A 215-amino-acid chain; its full sequence is Sodium channel regulatory subunit beta-3 (215 aa).

The signal sequence occupies residues 1–24; that stretch reads MPAFNRLLPLASLVLIYWVRVCFP. The region spanning 25 to 138 is the Ig-like C2-type domain; that stretch reads VCVEVPSETE…EAHRPFVKTT (114 aa). At 25-156 the chain is on the extracellular side; sequence VCVEVPSETE…EEAGEDFTSV (132 aa). Cystine bridges form between Cys-26–Cys-48 and Cys-45–Cys-120. N-linked (GlcNAc...) asparagine glycans are attached at residues Asn-95, Asn-109, Asn-113, and Asn-121. Residues 157-178 traverse the membrane as a helical segment; it reads VSEIMMYILLVFLTLWLFIEMI. Residues 179–215 are Cytoplasmic-facing; it reads YCYRKVSKAEEAAQENASDYLAIPSENKENSVVPVEE.

This sequence belongs to the sodium channel auxiliary subunit SCN3B (TC 8.A.17) family. In terms of assembly, a voltage-gated sodium (Nav) channel consists of an ion-conducting pore-forming alpha subunit functional on its own that is regulated by one or more beta subunits. Forms homodimers and homotrimers. SCN3B is non-covalently associated with alpha subunits and induces the formation of alpha subunit oligomers, including trimers. Interacts with SCN5A/Nav1.5; regulatory subunit of SCN5A/Nav1.5. Interacts with SCN7A/Nav2.1; probable regulatory subunit of SCN7A/Nav2.1. Interacts with SCN10A; regulatory subunit of SCN10A/Nav1.8. Interacts with NFASC; probably involved in targeting the sodium channels to the nodes of Ranvier. Intramolecular disulfide bonds favor the voltage-gated sodium channel oligomeric complex assembly. Post-translationally, N-glycosylated. In terms of tissue distribution, expressed broadly in neurons in the central and peripheral nervous systems, but not in glia and most non-neuronal cells. Weak detection in lung and adrenal gland.

It is found in the cell membrane. Functionally, regulatory subunit of multiple voltage-gated sodium (Nav) channels directly mediating the depolarization of excitable membranes. Navs, also called VGSCs (voltage-gated sodium channels) or VDSCs (voltage-dependent sodium channels), operate by switching between closed and open conformations depending on the voltage difference across the membrane. In the open conformation they allow Na(+) ions to selectively pass through the pore, along their electrochemical gradient. The influx of Na+ ions provokes membrane depolarization, initiating the propagation of electrical signals throughout cells and tissues. The accessory beta subunits participate in localization and functional modulation of the Nav channels. Voltage-gated sodium channels regulatory subunit that modulates channel gating kinetics. Modulates the activity of SCN2A/Nav1.2, causing a hyperpolarizing shift in the voltage-dependence of inactivation and increasing the fraction of channels operating in the fast gating mode. Also able to induce unique persistent SCN2A/Nav1.2-mediated sodium currents. Could modulate the activity of SCN10A/Nav1.8. This chain is Sodium channel regulatory subunit beta-3, found in Rattus norvegicus (Rat).